A 391-amino-acid chain; its full sequence is GTPase Obg (391 aa).

The Obg domain occupies 1-159 (MKFIDEALIR…RDLLLELMLL (159 aa)). The OBG-type G domain occupies 160 to 333 (ADVGMLGLPN…LTRDIMDFIE (174 aa)). GTP-binding positions include 166–173 (GLPNAGKS), 191–195 (FTTLV), 213–216 (DIPG), 283–286 (NKID), and 314–316 (SAA). Positions 173 and 193 each coordinate Mg(2+).

This sequence belongs to the TRAFAC class OBG-HflX-like GTPase superfamily. OBG GTPase family. Monomer. It depends on Mg(2+) as a cofactor.

It localises to the cytoplasm. Functionally, an essential GTPase which binds GTP, GDP and possibly (p)ppGpp with moderate affinity, with high nucleotide exchange rates and a fairly low GTP hydrolysis rate. Plays a role in control of the cell cycle, stress response, ribosome biogenesis and in those bacteria that undergo differentiation, in morphogenesis control. In Haemophilus ducreyi (strain 35000HP / ATCC 700724), this protein is GTPase Obg.